A 132-amino-acid polypeptide reads, in one-letter code: ATP synthase epsilon chain (132 aa).

Belongs to the ATPase epsilon chain family. As to quaternary structure, F-type ATPases have 2 components, CF(1) - the catalytic core - and CF(0) - the membrane proton channel. CF(1) has five subunits: alpha(3), beta(3), gamma(1), delta(1), epsilon(1). CF(0) has three main subunits: a, b and c.

It localises to the cell inner membrane. In terms of biological role, produces ATP from ADP in the presence of a proton gradient across the membrane. The polypeptide is ATP synthase epsilon chain (Cereibacter sphaeroides (strain ATCC 17025 / ATH 2.4.3) (Rhodobacter sphaeroides)).